We begin with the raw amino-acid sequence, 182 residues long: Ribosome-recycling factor (182 aa).

It belongs to the RRF family.

It is found in the cytoplasm. Functionally, responsible for the release of ribosomes from messenger RNA at the termination of protein biosynthesis. May increase the efficiency of translation by recycling ribosomes from one round of translation to another. The protein is Ribosome-recycling factor of Cyanothece sp. (strain PCC 7425 / ATCC 29141).